The following is a 908-amino-acid chain: Glutamate receptor ionotropic, kainate 2 (908 aa).

An N-terminal signal peptide occupies residues 1–31; the sequence is MKIIFPILSNPVFRRTVKLLLCLLWIGYSQG. Residues 32-561 are Extracellular-facing; it reads TTHVLRFGGI…VFSFLNPLSP (530 aa). N67, N73, N275, N378, N412, N423, and N430 each carry an N-linked (GlcNAc...) asparagine glycan. C96 and C347 form a disulfide bridge. L-glutamate is bound by residues P516, A518, and R523. The N-linked (GlcNAc...) asparagine glycan is linked to N546. Residues 562 to 582 traverse the membrane as a helical segment; the sequence is DIWMYILLAYLGVSCVLFVIA. The Cytoplasmic portion of the chain corresponds to 583-635; sequence RFSPYEWYNPHPCNPDSDVVENNFTLLNSFWFGVGALMQQGSELMPKALSTRI. A helical transmembrane segment spans residues 636-656; sequence VGGIWWFFTLIIISSYTANLA. Residues 657–819 are Extracellular-facing; it reads AFLTVERMES…KEASALGVQN (163 aa). L-glutamate-binding residues include A689, T690, and E738. C750 and C804 are disulfide-bonded. N751 is a glycosylation site (N-linked (GlcNAc...) asparagine). Residues 820–840 traverse the membrane as a helical segment; that stretch reads IGGIFIVLAAGLVLSVFVAVG. Topologically, residues 841–908 are cytoplasmic; it reads EFLYKSKKNA…RRLPGKETMA (68 aa). 2 positions are modified to phosphoserine; by PKC: S846 and S868. K886 is covalently cross-linked (Glycyl lysine isopeptide (Lys-Gly) (interchain with G-Cter in SUMO1)).

This sequence belongs to the glutamate-gated ion channel (TC 1.A.10.1) family. GRIK2 subfamily. As to quaternary structure, homotetramer and heterotetramer with GRIK5. Tetramers may be formed by the dimerization of dimers. Assembles into a kainate-gated homomeric channel that does not bind AMPA. Can form functional heteromeric receptors with GRIK5. Can form functional heteromeric receptors with GRIK3 and GRIK4. Interacts with DLG4. Interacts with NETO2. Interacts (via C-terminus) with KLHL17 (via kelch repeats); the interaction targets GRIK2 for degradation via ubiquitin-proteasome pathway. Post-translationally, sumoylation mediates kainate receptor-mediated endocytosis and regulates synaptic transmission. Sumoylation is enhanced by PIAS3 and desumoylated by SENP1. Ubiquitinated. Ubiquitination regulates the GRIK2 levels at the synapse by leading kainate receptor degradation through proteasome. In terms of processing, phosphorylated by PKC at Ser-868 upon agonist activation, this directly enhance sumoylation. Expression is higher in cerebellum than in cerebral cortex.

The protein resides in the cell membrane. The protein localises to the postsynaptic cell membrane. It catalyses the reaction Ca(2+)(in) = Ca(2+)(out). It carries out the reaction Na(+)(in) = Na(+)(out). With respect to regulation, cold receptor activity activated by temperatures between 10-19 degrees Celsius. Its function is as follows. Ionotropic glutamate receptor that functions as a cation permeable ligand-gated ion channel, gated by L-glutamate and the glutamatergic agonist kainic acid. L-glutamate acts as an excitatory neurotransmitter at many synapses in the central nervous system. Binding of the excitatory neurotransmitter L-glutamate induces a conformation change, leading to the opening of the cation channel, and thereby converts the chemical signal to an electrical impulse. The receptor then desensitizes rapidly and enters a transient inactive state, characterized by the presence of bound agonist. Modulates cell surface expression of NETO2. In association with GRIK3, involved in presynaptic facilitation of glutamate release at hippocampal mossy fiber synapses. Functionally, independent of its ionotropic glutamate receptor activity, acts as a thermoreceptor conferring sensitivity to cold temperatures. Functions in dorsal root ganglion neurons. In Homo sapiens (Human), this protein is Glutamate receptor ionotropic, kainate 2 (GRIK2).